The primary structure comprises 334 residues: Ribosomal RNA small subunit methyltransferase H (334 aa).

Residues 54 to 56 (GGH), aspartate 74, phenylalanine 100, aspartate 121, and glutamine 128 contribute to the S-adenosyl-L-methionine site. The interval 272–318 (RHSKGQYPEDENLPMPPKRPRYFSKPKRVGPSKAEISNNPRSRSAWL) is disordered. The span at 289-301 (KRPRYFSKPKRVG) shows a compositional bias: basic residues.

This sequence belongs to the methyltransferase superfamily. RsmH family.

The protein localises to the cytoplasm. It carries out the reaction cytidine(1402) in 16S rRNA + S-adenosyl-L-methionine = N(4)-methylcytidine(1402) in 16S rRNA + S-adenosyl-L-homocysteine + H(+). In terms of biological role, specifically methylates the N4 position of cytidine in position 1402 (C1402) of 16S rRNA. This is Ribosomal RNA small subunit methyltransferase H from Psychrobacter arcticus (strain DSM 17307 / VKM B-2377 / 273-4).